Reading from the N-terminus, the 203-residue chain is Urease accessory protein UreG (203 aa).

GTP is bound at residue 10 to 17; sequence GPVGAGKT.

It belongs to the SIMIBI class G3E GTPase family. UreG subfamily. Homodimer. UreD, UreF and UreG form a complex that acts as a GTP-hydrolysis-dependent molecular chaperone, activating the urease apoprotein by helping to assemble the nickel containing metallocenter of UreC. The UreE protein probably delivers the nickel.

It localises to the cytoplasm. Functionally, facilitates the functional incorporation of the urease nickel metallocenter. This process requires GTP hydrolysis, probably effectuated by UreG. The sequence is that of Urease accessory protein UreG from Lachnoclostridium phytofermentans (strain ATCC 700394 / DSM 18823 / ISDg) (Clostridium phytofermentans).